A 246-amino-acid polypeptide reads, in one-letter code: MSGHSKWHNIQAKKGKVDAKRGKIFTKIGKEIVVAVKQGGPSADSNPRLRDVIAKAKANNMPNDTIERSIKKASGELNAVDYETITYEGYGPAGIAVLVDVLTDNKNRSAGNVRYAFTKQGGNMGSTGCVSFMFQSKGQIVIEKKDGLDEDELMMMALDAGAEDFESEDEVYVVATSQEDFGTVREALEAEGLEFLEAEIKMVPDTYTAIDEDTATKFQKMLDVLEDDDDVQNVYHNAEFPEGWEE.

This sequence belongs to the TACO1 family.

The protein localises to the cytoplasm. This is Probable transcriptional regulatory protein CLK_2466 from Clostridium botulinum (strain Loch Maree / Type A3).